Reading from the N-terminus, the 318-residue chain is Acetyl-coenzyme A carboxylase carboxyl transferase subunit alpha (318 aa).

Residues 39-293 enclose the CoA carboxyltransferase C-terminal domain; sequence KLEKKVDKMR…HEALARHLKE (255 aa).

The protein belongs to the AccA family. Acetyl-CoA carboxylase is a heterohexamer composed of biotin carboxyl carrier protein (AccB), biotin carboxylase (AccC) and two subunits each of ACCase subunit alpha (AccA) and ACCase subunit beta (AccD).

The protein localises to the cytoplasm. The catalysed reaction is N(6)-carboxybiotinyl-L-lysyl-[protein] + acetyl-CoA = N(6)-biotinyl-L-lysyl-[protein] + malonyl-CoA. It participates in lipid metabolism; malonyl-CoA biosynthesis; malonyl-CoA from acetyl-CoA: step 1/1. Its function is as follows. Component of the acetyl coenzyme A carboxylase (ACC) complex. First, biotin carboxylase catalyzes the carboxylation of biotin on its carrier protein (BCCP) and then the CO(2) group is transferred by the carboxyltransferase to acetyl-CoA to form malonyl-CoA. This is Acetyl-coenzyme A carboxylase carboxyl transferase subunit alpha from Geobacter metallireducens (strain ATCC 53774 / DSM 7210 / GS-15).